We begin with the raw amino-acid sequence, 80 residues long: Adipogenin (80 aa).

The chain crosses the membrane as a helical span at residues 14-34; that stretch reads FSFLVFWFCLPVGLLLLLIIW.

Belongs to the adipogenin family.

The protein resides in the membrane. Its subcellular location is the nucleus. Its function is as follows. Plays a role in stimulating adipocyte differentiation and development. This Homo sapiens (Human) protein is Adipogenin.